The primary structure comprises 505 residues: MNKKVILMILDGWGKSPDPKVSAIDNANIPFINSLYKNYPSAQLRTDGLNVGLPEGQMGNSEVGHMNLGAGRIVYQDLAKINLAVQNKTLSQEKALKEAFQYAKENNKPIHFLGLLSDGGVHSHTSHLRGLLDAAQNFGLKKTFIHAFTDGRDVDPKSAIATIENLNKYIHNTPAKLASVIGRYYAMDRDKRWERIKLAYDLLVNGKGKPSQDAVLSISNSYQNNITDEFIEPIIMTDDNNNPIATIQEDDVVIFFNFRTDRGRELTEALSQQDFHEQNMHKLNLYYVTLTNYDETYKNVKVIYNKDNITQTLGEVLEKAGKKQIRIAETEKYPHVTFFFSGGREQPFLGESRILKNSPKVATYDLQPEMSAYELTEALIPEIEKTEADFICLNFANGDMVGHTGIMSAAIKACQAVNKCVEKVITAALAHNYTTIVIADHGNCETMINPDGTPNTAHTTNPVPIILVDKELKTIHDGVLGDIAPTILDLMGIKKPEVMTRNSLL.

Mn(2+)-binding residues include Asp11 and Ser61. The Phosphoserine intermediate role is filled by Ser61. Substrate-binding positions include His122, 152 to 153, Arg183, Arg189, 259 to 262, and Lys332; these read RD and RTDR. The Mn(2+) site is built by Asp399, His403, Asp440, His441, and His458.

The protein belongs to the BPG-independent phosphoglycerate mutase family. In terms of assembly, monomer. Mn(2+) serves as cofactor.

The enzyme catalyses (2R)-2-phosphoglycerate = (2R)-3-phosphoglycerate. The protein operates within carbohydrate degradation; glycolysis; pyruvate from D-glyceraldehyde 3-phosphate: step 3/5. Functionally, catalyzes the interconversion of 2-phosphoglycerate and 3-phosphoglycerate. The polypeptide is 2,3-bisphosphoglycerate-independent phosphoglycerate mutase (Flavobacterium psychrophilum (strain ATCC 49511 / DSM 21280 / CIP 103535 / JIP02/86)).